The chain runs to 274 residues: Formamidopyrimidine-DNA glycosylase (274 aa).

The active-site Schiff-base intermediate with DNA is the Pro2. Glu3 (proton donor) is an active-site residue. Lys57 (proton donor; for beta-elimination activity) is an active-site residue. Residues His90, Arg109, and Lys150 each contribute to the DNA site. An FPG-type zinc finger spans residues 235-269; that stretch reads FVYGRKDKACLICGHTIESIKQGQRSTFFCRHCQH. Arg259 (proton donor; for delta-elimination activity) is an active-site residue.

Belongs to the FPG family. Monomer. Zn(2+) serves as cofactor.

It catalyses the reaction Hydrolysis of DNA containing ring-opened 7-methylguanine residues, releasing 2,6-diamino-4-hydroxy-5-(N-methyl)formamidopyrimidine.. The catalysed reaction is 2'-deoxyribonucleotide-(2'-deoxyribose 5'-phosphate)-2'-deoxyribonucleotide-DNA = a 3'-end 2'-deoxyribonucleotide-(2,3-dehydro-2,3-deoxyribose 5'-phosphate)-DNA + a 5'-end 5'-phospho-2'-deoxyribonucleoside-DNA + H(+). Its function is as follows. Involved in base excision repair of DNA damaged by oxidation or by mutagenic agents. Acts as a DNA glycosylase that recognizes and removes damaged bases. Has a preference for oxidized purines, such as 7,8-dihydro-8-oxoguanine (8-oxoG). Has AP (apurinic/apyrimidinic) lyase activity and introduces nicks in the DNA strand. Cleaves the DNA backbone by beta-delta elimination to generate a single-strand break at the site of the removed base with both 3'- and 5'-phosphates. This chain is Formamidopyrimidine-DNA glycosylase, found in Proteus mirabilis (strain HI4320).